The sequence spans 452 residues: Membrane-bound lytic murein transglycosylase D (452 aa).

A signal peptide spans 1-15 (MKAKAILLASVLLVG). The N-palmitoyl cysteine moiety is linked to residue Cys-16. Cys-16 carries the S-diacylglycerol cysteine lipid modification. The segment at 113 to 198 (NMPMELVLLP…LLTVAAYNSG (86 aa)) is slt-type domain. The active site involves Glu-125. LysM domains follow at residues 341-384 (RVYT…SLTI) and 400-448 (ITYR…KNNN).

The protein belongs to the transglycosylase Slt family.

Its subcellular location is the cell membrane. It carries out the reaction Exolytic cleavage of the (1-&gt;4)-beta-glycosidic linkage between N-acetylmuramic acid (MurNAc) and N-acetylglucosamine (GlcNAc) residues in peptidoglycan, from either the reducing or the non-reducing ends of the peptidoglycan chains, with concomitant formation of a 1,6-anhydrobond in the MurNAc residue.. Murein-degrading enzyme. May play a role in recycling of muropeptides during cell elongation and/or cell division. In Escherichia coli O6:H1 (strain CFT073 / ATCC 700928 / UPEC), this protein is Membrane-bound lytic murein transglycosylase D (mltD).